The sequence spans 165 residues: SsrA-binding protein (165 aa).

Residues 141 to 165 (KLHDKRENEKRKQSEREVKSALARY) are disordered. Over residues 144–159 (DKRENEKRKQSEREVK) the composition is skewed to basic and acidic residues.

It belongs to the SmpB family.

Its subcellular location is the cytoplasm. Required for rescue of stalled ribosomes mediated by trans-translation. Binds to transfer-messenger RNA (tmRNA), required for stable association of tmRNA with ribosomes. tmRNA and SmpB together mimic tRNA shape, replacing the anticodon stem-loop with SmpB. tmRNA is encoded by the ssrA gene; the 2 termini fold to resemble tRNA(Ala) and it encodes a 'tag peptide', a short internal open reading frame. During trans-translation Ala-aminoacylated tmRNA acts like a tRNA, entering the A-site of stalled ribosomes, displacing the stalled mRNA. The ribosome then switches to translate the ORF on the tmRNA; the nascent peptide is terminated with the 'tag peptide' encoded by the tmRNA and targeted for degradation. The ribosome is freed to recommence translation, which seems to be the essential function of trans-translation. The polypeptide is SsrA-binding protein (Prochlorococcus marinus (strain SARG / CCMP1375 / SS120)).